The following is a 1474-amino-acid chain: Alpha-2-macroglobulin (1474 aa).

The signal sequence occupies residues 1 to 23 (MGKNKLLHPSLVLLLLVLLPTDA). Cys48 and Cys86 are disulfide-bonded. N-linked (GlcNAc...) (complex) asparagine glycosylation is present at Asn55. Residues Asn70 and Asn247 are each glycosylated (N-linked (GlcNAc...) asparagine). Disulfide bonds link Cys251/Cys299 and Cys269/Cys287. N-linked (GlcNAc...) asparagine glycans are attached at residues Asn396 and Asn410. Disulfide bonds link Cys470–Cys563, Cys595–Cys771, Cys642–Cys689, Cys821–Cys849, Cys847–Cys883, Cys921–Cys1321, Cys1079–Cys1127, and Cys1352–Cys1467. Residues 690-728 (PQLQQYEMHGPEGLRVGFYESDVMGRGHARLVHVEEPHT) form a bait region region. Isoglutamyl lysine isopeptide (Gln-Lys) (interchain with K-? in other proteins) cross-links involve residues Gln693 and Gln694. 3 inhibitory regions span residues 704-709 (RVGFYE), 719-723 (RLVHV), and 730-735 (TVRKYF). Asn869 is a glycosylation site (N-linked (GlcNAc...) asparagine). The isoglutamyl cysteine thioester (Cys-Gln) cross-link spans 972–975 (CGEQ). Asn991 is a glycosylation site (N-linked (GlcNAc...) asparagine). A glycan (N-linked (GlcNAc...) (complex) asparagine) is linked at Asn1424.

The protein belongs to the protease inhibitor I39 (alpha-2-macroglobulin) family. In terms of assembly, homotetramer; disulfide-linked. Secreted in plasma.

The protein localises to the secreted. Its function is as follows. Is able to inhibit all four classes of proteinases by a unique 'trapping' mechanism. This protein has a peptide stretch, called the 'bait region' which contains specific cleavage sites for different proteinases. When a proteinase cleaves the bait region, a conformational change is induced in the protein which traps the proteinase. The entrapped enzyme remains active against low molecular weight substrates (activity against high molecular weight substrates is greatly reduced). Following cleavage in the bait region, a thioester bond is hydrolyzed and mediates the covalent binding of the protein to the proteinase. The sequence is that of Alpha-2-macroglobulin (A2M) from Homo sapiens (Human).